The chain runs to 80 residues: Clavanin-D (80 aa).

The N-terminal stretch at 1 to 19 is a signal peptide; that stretch reads MKTTILILLILGLGINAKS. Residues 20–29 constitute a propeptide that is removed on maturation; sequence LEERKSEEEK. Phe-52 is subject to Phenylalanine amide. Residues 54–80 constitute a propeptide that is removed on maturation; it reads DDQQDNGKFYGHYAEDNGKHWYDTGDQ.

Hemocytes and pharyngeal tissues.

It is found in the secreted. In terms of biological role, has antimicrobial activity against E.coli, L.monocytogenes and C.albicans. This Styela clava (Sea squirt) protein is Clavanin-D.